The sequence spans 843 residues: Eisosome protein 1 (843 aa).

Serine 2 is modified (N-acetylserine). Phosphoserine is present on serine 2. Residues 13–44 (HNIGKTSGGGSRTSSITSSKKSLKHGSKSLRK) form a disordered region. Residues 33–44 (KSLKHGSKSLRK) show a composition bias toward basic residues. Residues serine 88 and serine 130 each carry the phosphoserine modification. A disordered region spans residues 120–174 (KMGPKVVRNNSITSATSKTSKESQTKRKSKESPGAAASKAYSMTMETTSLSSQTN). Composition is skewed to polar residues over residues 127–137 (RNNSITSATSK) and 163–174 (TMETTSLSSQTN). Serine 182, serine 401, serine 584, and serine 710 each carry phosphoserine. Residues 717–843 (DLPTQLEKIE…QDAISNQEKK (127 aa)) are disordered. Threonine 720 bears the Phosphothreonine mark. Over residues 752–764 (STAAKEATETSSA) the composition is skewed to low complexity. Phosphoserine is present on residues serine 763 and serine 775. Positions 781–797 (SGKEDANDCKSAEHSKE) are enriched in basic and acidic residues. Polar residues predominate over residues 798–810 (ISVSQKAGNNKSL). A phosphoserine mark is found at serine 816, serine 828, serine 829, and serine 838.

It belongs to the EIS1 family.

Its subcellular location is the cytoplasmic granule. It is found in the cell membrane. Its function is as follows. Required for normal formation of eisosomes, large cytoplasmic protein assemblies that localize to specialized domains on plasma membrane and mark the site of endocytosis. This Saccharomyces cerevisiae (strain RM11-1a) (Baker's yeast) protein is Eisosome protein 1 (EIS1).